The sequence spans 93 residues: UPF0298 protein GWCH70_0997 (93 aa).

Belongs to the UPF0298 family.

The protein localises to the cytoplasm. This chain is UPF0298 protein GWCH70_0997, found in Geobacillus sp. (strain WCH70).